The following is a 639-amino-acid chain: Chaperone protein DnaK (639 aa).

Threonine 197 carries the post-translational modification Phosphothreonine; by autocatalysis. Composition is skewed to basic and acidic residues over residues 514 to 529 (AEEN…DLVE) and 540 to 553 (GTEK…EKVD). Disordered stretches follow at residues 514–554 (AEEN…KVDP) and 603–639 (DKAE…RKRG). Over residues 612–633 (APEEEERGVDEDIVDADFEDLD) the composition is skewed to acidic residues.

It belongs to the heat shock protein 70 family.

In terms of biological role, acts as a chaperone. The sequence is that of Chaperone protein DnaK from Jannaschia sp. (strain CCS1).